The primary structure comprises 275 residues: Penicillin-insensitive murein endopeptidase (275 aa).

The signal sequence occupies residues M1–A19. Cystine bridges form between C44–C264, C187–C235, and C216–C223. H110, H113, D120, D147, and H211 together coordinate Zn(2+). A disordered region spans residues G234–P262.

It belongs to the peptidase M74 family. Dimer. Zn(2+) is required as a cofactor.

The protein resides in the periplasm. Its function is as follows. Murein endopeptidase that cleaves the D-alanyl-meso-2,6-diamino-pimelyl amide bond that connects peptidoglycan strands. Likely plays a role in the removal of murein from the sacculus. The polypeptide is Penicillin-insensitive murein endopeptidase (Yersinia enterocolitica serotype O:8 / biotype 1B (strain NCTC 13174 / 8081)).